Here is a 278-residue protein sequence, read N- to C-terminus: Gap junction delta-3 protein (278 aa).

Over methionine 1–leucine 24 the chain is Cytoplasmic. Residues tryptophan 25–phenylalanine 45 traverse the membrane as a helical segment. Residues glutamate 46 to arginine 76 are Extracellular-facing. The chain crosses the membrane as a helical span at residues phenylalanine 77–methionine 97. Over histidine 98–tyrosine 136 the chain is Cytoplasmic. The chain crosses the membrane as a helical span at residues leucine 137–leucine 157. Residues tyrosine 158 to threonine 188 are Extracellular-facing. Residues valine 189–leucine 209 form a helical membrane-spanning segment. The Cytoplasmic portion of the chain corresponds to glycine 210–isoleucine 278. The disordered stretch occupies residues leucine 223–isoleucine 278.

Belongs to the connexin family. Delta-type subfamily. A connexon is composed of a hexamer of connexins.

The protein resides in the cell membrane. The protein localises to the cell junction. It localises to the gap junction. Its function is as follows. One gap junction consists of a cluster of closely packed pairs of transmembrane channels, the connexons, through which materials of low MW diffuse from one cell to a neighboring cell. This Mus musculus (Mouse) protein is Gap junction delta-3 protein (Gjd3).